The primary structure comprises 121 residues: Ribosome-binding factor A (121 aa).

This sequence belongs to the RbfA family. Monomer. Binds 30S ribosomal subunits, but not 50S ribosomal subunits or 70S ribosomes.

Its subcellular location is the cytoplasm. Its function is as follows. One of several proteins that assist in the late maturation steps of the functional core of the 30S ribosomal subunit. Associates with free 30S ribosomal subunits (but not with 30S subunits that are part of 70S ribosomes or polysomes). Required for efficient processing of 16S rRNA. May interact with the 5'-terminal helix region of 16S rRNA. The sequence is that of Ribosome-binding factor A from Agathobacter rectalis (strain ATCC 33656 / DSM 3377 / JCM 17463 / KCTC 5835 / VPI 0990) (Eubacterium rectale).